Consider the following 590-residue polypeptide: Probable metalloendopeptidase G1-type (590 aa).

Position 41 (histidine 41) interacts with Zn(2+). Glutamate 44 is a catalytic residue. Histidine 45 is a binding site for Zn(2+).

This sequence belongs to the peptidase M44 family. Zn(2+) serves as cofactor.

Seems to be involved in viral proteins maturation by cleavage at Ala-Gly-|-Xaa motifs. The sequence is that of Probable metalloendopeptidase G1-type from Homo sapiens (Human).